A 209-amino-acid chain; its full sequence is Uracil phosphoribosyltransferase (209 aa).

5-phospho-alpha-D-ribose 1-diphosphate is bound by residues Arg79, Arg104, and 131 to 139 (DPMLATGGS). Uracil is bound by residues Ile194 and 199–201 (GDA). Asp200 contributes to the 5-phospho-alpha-D-ribose 1-diphosphate binding site.

It belongs to the UPRTase family. It depends on Mg(2+) as a cofactor.

The catalysed reaction is UMP + diphosphate = 5-phospho-alpha-D-ribose 1-diphosphate + uracil. It functions in the pathway pyrimidine metabolism; UMP biosynthesis via salvage pathway; UMP from uracil: step 1/1. Allosterically activated by GTP. Catalyzes the conversion of uracil and 5-phospho-alpha-D-ribose 1-diphosphate (PRPP) to UMP and diphosphate. The sequence is that of Uracil phosphoribosyltransferase from Lactobacillus gasseri (strain ATCC 33323 / DSM 20243 / BCRC 14619 / CIP 102991 / JCM 1131 / KCTC 3163 / NCIMB 11718 / NCTC 13722 / AM63).